We begin with the raw amino-acid sequence, 225 residues long: Phosphoribosylformylglycinamidine synthase subunit PurQ (225 aa).

A Glutamine amidotransferase type-1 domain is found at 5 to 225 (RFGIVVFPGS…WQSIVQSLAG (221 aa)). The active-site Nucleophile is the Cys89. Catalysis depends on residues His198 and Glu200.

Part of the FGAM synthase complex composed of 1 PurL, 1 PurQ and 2 PurS subunits.

The protein resides in the cytoplasm. It carries out the reaction N(2)-formyl-N(1)-(5-phospho-beta-D-ribosyl)glycinamide + L-glutamine + ATP + H2O = 2-formamido-N(1)-(5-O-phospho-beta-D-ribosyl)acetamidine + L-glutamate + ADP + phosphate + H(+). It catalyses the reaction L-glutamine + H2O = L-glutamate + NH4(+). It functions in the pathway purine metabolism; IMP biosynthesis via de novo pathway; 5-amino-1-(5-phospho-D-ribosyl)imidazole from N(2)-formyl-N(1)-(5-phospho-D-ribosyl)glycinamide: step 1/2. In terms of biological role, part of the phosphoribosylformylglycinamidine synthase complex involved in the purines biosynthetic pathway. Catalyzes the ATP-dependent conversion of formylglycinamide ribonucleotide (FGAR) and glutamine to yield formylglycinamidine ribonucleotide (FGAM) and glutamate. The FGAM synthase complex is composed of three subunits. PurQ produces an ammonia molecule by converting glutamine to glutamate. PurL transfers the ammonia molecule to FGAR to form FGAM in an ATP-dependent manner. PurS interacts with PurQ and PurL and is thought to assist in the transfer of the ammonia molecule from PurQ to PurL. In Synechococcus sp. (strain JA-3-3Ab) (Cyanobacteria bacterium Yellowstone A-Prime), this protein is Phosphoribosylformylglycinamidine synthase subunit PurQ.